A 340-amino-acid chain; its full sequence is Pre-mRNA-splicing factor cwf17 (340 aa).

WD repeat units lie at residues 48–87 (GHTA…KNYG), 91–130 (GCKG…KIRK), 133–173 (GHAG…CIKT), 175–214 (EEKY…CSHV), 217–256 (GHKD…SAQR), 267–306 (GQEH…RYVL), and 308–339 (GHEG…LGEL).

Belongs to the 40S cdc5-associated complex (or cwf complex), a spliceosome sub-complex reminiscent of a late-stage spliceosome composed of the U2, U5 and U6 snRNAs and at least brr2, cdc5, cwf2/prp3, cwf3/syf1, cwf4/syf3, cwf5/ecm2, spp42/cwf6, cwf7/spf27, cwf8, cwf9, cwf10, cwf11, cwf12, prp45/cwf13, cwf14, cwf15, cwf16, cwf17, cwf18, cwf19, cwf20, cwf21, cwf22, cwf23, cwf24, cwf25, cwf26, cyp7/cwf27, cwf28, cwf29/ist3, lea1, msl1, prp5/cwf1, prp10, prp12/sap130, prp17, prp22, sap61, sap62, sap114, sap145, slu7, smb1, smd1, smd3, smf1, smg1 and syf2.

Its subcellular location is the nucleus. Involved in mRNA splicing where it associates with cdc5 and the other cwf proteins as part of the spliceosome. The chain is Pre-mRNA-splicing factor cwf17 (cwf17) from Schizosaccharomyces pombe (strain 972 / ATCC 24843) (Fission yeast).